We begin with the raw amino-acid sequence, 971 residues long: uncharacterized protein (971 aa).

This is an uncharacterized protein from Caenorhabditis elegans.